Reading from the N-terminus, the 29-residue chain is U-limacoditoxin(12)-Dv72 (29 aa).

An N-terminal signal peptide occupies residues 1–15 (MNFGMLKLLTVLIIC). The residue at position 27 (Asn-27) is an Asparagine amide.

It belongs to the limacoditoxin-12 family. In terms of tissue distribution, expressed by the venom secretory cell of the spine. The spine is a cuticular structure containing a single large nucleated venom-secreting cell at its base. It is an independent unit capable of producing, storing and injecting venom. On the back of D.vulnerans caterpillars, spines are grouped together by 50 to 100 to form scoli, of which there are eight in D.vulnerans.

It is found in the secreted. Functionally, probable toxin. Does not show insecticidal, antimicrobial and antiparasitic activities. Does not induce increase in intracellular calcium in mouse DRG neurons, suggesting that it does not induce pain. This is U-limacoditoxin(12)-Dv72 from Doratifera vulnerans (Mottled cup moth).